Consider the following 375-residue polypeptide: 4-hydroxy-3-methylbut-2-en-1-yl diphosphate synthase (flavodoxin) (375 aa).

Positions 270, 273, 305, and 312 each coordinate [4Fe-4S] cluster.

The protein belongs to the IspG family. It depends on [4Fe-4S] cluster as a cofactor.

The catalysed reaction is (2E)-4-hydroxy-3-methylbut-2-enyl diphosphate + oxidized [flavodoxin] + H2O + 2 H(+) = 2-C-methyl-D-erythritol 2,4-cyclic diphosphate + reduced [flavodoxin]. It participates in isoprenoid biosynthesis; isopentenyl diphosphate biosynthesis via DXP pathway; isopentenyl diphosphate from 1-deoxy-D-xylulose 5-phosphate: step 5/6. Converts 2C-methyl-D-erythritol 2,4-cyclodiphosphate (ME-2,4cPP) into 1-hydroxy-2-methyl-2-(E)-butenyl 4-diphosphate. The sequence is that of 4-hydroxy-3-methylbut-2-en-1-yl diphosphate synthase (flavodoxin) from Yersinia pseudotuberculosis serotype IB (strain PB1/+).